The primary structure comprises 215 residues: Protein FAM167A (215 aa).

Disordered regions lie at residues 1 to 26 and 63 to 109; these read MSVPQIQVEEVSEKDRPAGAAVPPDD and RPAA…LTTG. Positions 124–157 form a coiled coil; it reads LRKELAEMRLQDQQLARQLMRLRGDINKLKIEQT.

Belongs to the FAM167 (SEC) family.

The protein is Protein FAM167A (Fam167a) of Mus musculus (Mouse).